We begin with the raw amino-acid sequence, 171 residues long: MPRVGIIMGSDSDLPVMKQAAEILEEFGIDYEITIVSAHRTPDRMFEYAKNAEERGIEVIIAGAGGAAHLPGMVASITHLPVIGVPVKTSTLNGLDSLFSIVQMPGGVPVATVAINNAKNAGILAASILGIKYPEIARKVKEYKERMKREVLEKAQRLEQIGYKEYLNQKE.

3 residues coordinate substrate: Ser-10, Asp-13, and Arg-40.

The protein belongs to the AIR carboxylase family. Class I subfamily.

The enzyme catalyses 5-carboxyamino-1-(5-phospho-D-ribosyl)imidazole + H(+) = 5-amino-1-(5-phospho-D-ribosyl)imidazole-4-carboxylate. It participates in purine metabolism; IMP biosynthesis via de novo pathway; 5-amino-1-(5-phospho-D-ribosyl)imidazole-4-carboxylate from 5-amino-1-(5-phospho-D-ribosyl)imidazole (N5-CAIR route): step 2/2. In terms of biological role, catalyzes the conversion of N5-carboxyaminoimidazole ribonucleotide (N5-CAIR) to 4-carboxy-5-aminoimidazole ribonucleotide (CAIR). The chain is N5-carboxyaminoimidazole ribonucleotide mutase from Thermotoga maritima (strain ATCC 43589 / DSM 3109 / JCM 10099 / NBRC 100826 / MSB8).